The primary structure comprises 173 residues: 2-C-methyl-D-erythritol 2,4-cyclodiphosphate synthase (173 aa).

The a divalent metal cation site is built by Asp17 and His19. Residues 17 to 19 (DVH) and 49 to 50 (HS) each bind 4-CDP-2-C-methyl-D-erythritol 2-phosphate. His57 provides a ligand contact to a divalent metal cation. Residues 76-80 (FPNTD), 147-150 (TTTE), Phe154, and Arg157 contribute to the 4-CDP-2-C-methyl-D-erythritol 2-phosphate site.

The protein belongs to the IspF family. As to quaternary structure, homotrimer. A divalent metal cation serves as cofactor.

The enzyme catalyses 4-CDP-2-C-methyl-D-erythritol 2-phosphate = 2-C-methyl-D-erythritol 2,4-cyclic diphosphate + CMP. Its pathway is isoprenoid biosynthesis; isopentenyl diphosphate biosynthesis via DXP pathway; isopentenyl diphosphate from 1-deoxy-D-xylulose 5-phosphate: step 4/6. In terms of biological role, involved in the biosynthesis of isopentenyl diphosphate (IPP) and dimethylallyl diphosphate (DMAPP), two major building blocks of isoprenoid compounds. Catalyzes the conversion of 4-diphosphocytidyl-2-C-methyl-D-erythritol 2-phosphate (CDP-ME2P) to 2-C-methyl-D-erythritol 2,4-cyclodiphosphate (ME-CPP) with a corresponding release of cytidine 5-monophosphate (CMP). This chain is 2-C-methyl-D-erythritol 2,4-cyclodiphosphate synthase, found in Ehrlichia canis (strain Jake).